We begin with the raw amino-acid sequence, 242 residues long: Large ribosomal subunit protein uL2 (242 aa).

Residues 201–242 form a disordered region; it reads VDHPFGGGRHQHTGKPTTVSRKKVPPGRKVGHISARRTGVRK. The span at 220–242 shows a compositional bias: basic residues; sequence SRKKVPPGRKVGHISARRTGVRK.

It belongs to the universal ribosomal protein uL2 family. As to quaternary structure, part of the 50S ribosomal subunit. Forms a bridge to the 30S subunit in the 70S ribosome.

One of the primary rRNA binding proteins. Required for association of the 30S and 50S subunits to form the 70S ribosome, for tRNA binding and peptide bond formation. It has been suggested to have peptidyltransferase activity; this is somewhat controversial. Makes several contacts with the 16S rRNA in the 70S ribosome. This is Large ribosomal subunit protein uL2 from Methanocaldococcus jannaschii (strain ATCC 43067 / DSM 2661 / JAL-1 / JCM 10045 / NBRC 100440) (Methanococcus jannaschii).